The primary structure comprises 199 residues: NADH-quinone oxidoreductase subunit C (199 aa).

This sequence belongs to the complex I 30 kDa subunit family. As to quaternary structure, NDH-1 is composed of 14 different subunits. Subunits NuoB, C, D, E, F, and G constitute the peripheral sector of the complex.

The protein localises to the cell inner membrane. The catalysed reaction is a quinone + NADH + 5 H(+)(in) = a quinol + NAD(+) + 4 H(+)(out). NDH-1 shuttles electrons from NADH, via FMN and iron-sulfur (Fe-S) centers, to quinones in the respiratory chain. The immediate electron acceptor for the enzyme in this species is believed to be ubiquinone. Couples the redox reaction to proton translocation (for every two electrons transferred, four hydrogen ions are translocated across the cytoplasmic membrane), and thus conserves the redox energy in a proton gradient. In Rhodopseudomonas palustris (strain BisB18), this protein is NADH-quinone oxidoreductase subunit C.